Consider the following 632-residue polypeptide: tRNA uridine 5-carboxymethylaminomethyl modification enzyme MnmG (632 aa).

FAD-binding positions include 13 to 18 (GGGHAG), valine 125, and serine 180. 273 to 287 (GPRYCPSIEDKVMRF) serves as a coordination point for NAD(+). Residue glutamine 370 coordinates FAD.

The protein belongs to the MnmG family. In terms of assembly, homodimer. Heterotetramer of two MnmE and two MnmG subunits. FAD serves as cofactor.

The protein localises to the cytoplasm. Its function is as follows. NAD-binding protein involved in the addition of a carboxymethylaminomethyl (cmnm) group at the wobble position (U34) of certain tRNAs, forming tRNA-cmnm(5)s(2)U34. The polypeptide is tRNA uridine 5-carboxymethylaminomethyl modification enzyme MnmG (Vibrio vulnificus (strain YJ016)).